The chain runs to 299 residues: ATP phosphoribosyltransferase (299 aa).

Belongs to the ATP phosphoribosyltransferase family. Long subfamily. The cofactor is Mg(2+).

It is found in the cytoplasm. It catalyses the reaction 1-(5-phospho-beta-D-ribosyl)-ATP + diphosphate = 5-phospho-alpha-D-ribose 1-diphosphate + ATP. It functions in the pathway amino-acid biosynthesis; L-histidine biosynthesis; L-histidine from 5-phospho-alpha-D-ribose 1-diphosphate: step 1/9. Feedback inhibited by histidine. Catalyzes the condensation of ATP and 5-phosphoribose 1-diphosphate to form N'-(5'-phosphoribosyl)-ATP (PR-ATP). Has a crucial role in the pathway because the rate of histidine biosynthesis seems to be controlled primarily by regulation of HisG enzymatic activity. The protein is ATP phosphoribosyltransferase of Rhodopirellula baltica (strain DSM 10527 / NCIMB 13988 / SH1).